Consider the following 119-residue polypeptide: Large ribosomal subunit protein uL24 (119 aa).

This sequence belongs to the universal ribosomal protein uL24 family. In terms of assembly, part of the 50S ribosomal subunit.

In terms of biological role, one of two assembly initiator proteins, it binds directly to the 5'-end of the 23S rRNA, where it nucleates assembly of the 50S subunit. One of the proteins that surrounds the polypeptide exit tunnel on the outside of the subunit. The protein is Large ribosomal subunit protein uL24 of Leptospira interrogans serogroup Icterohaemorrhagiae serovar copenhageni (strain Fiocruz L1-130).